Reading from the N-terminus, the 508-residue chain is Cobyric acid synthase (508 aa).

Residues 249–451 (EVDVAIINLP…IHGIFENSLF (203 aa)) form the GATase cobBQ-type domain. C330 serves as the catalytic Nucleophile. The active site involves H443.

This sequence belongs to the CobB/CobQ family. CobQ subfamily.

It functions in the pathway cofactor biosynthesis; adenosylcobalamin biosynthesis. In terms of biological role, catalyzes amidations at positions B, D, E, and G on adenosylcobyrinic A,C-diamide. NH(2) groups are provided by glutamine, and one molecule of ATP is hydrogenolyzed for each amidation. This is Cobyric acid synthase from Caldanaerobacter subterraneus subsp. tengcongensis (strain DSM 15242 / JCM 11007 / NBRC 100824 / MB4) (Thermoanaerobacter tengcongensis).